The following is a 284-amino-acid chain: Anaerobic dimethyl sulfoxide reductase chain YnfH (284 aa).

Over 1–9 (MGNGWHEWP) the chain is Periplasmic. The chain crosses the membrane as a helical span at residues 10–30 (LVIFTVLGQCVVGALIVSGIG). The Cytoplasmic segment spans residues 31–45 (WFAAKNDADRQRIVR). Residues 46 to 66 (GMFFLWLLMGVGFIASVMHLG) traverse the membrane as a helical segment. The Periplasmic portion of the chain corresponds to 67 to 86 (SPLRAFNSLNRIGASGLSNE). Residues 87 to 107 (IAAGSIFFAVGGLWWLVAVIG) traverse the membrane as a helical segment. The Cytoplasmic portion of the chain corresponds to 108–115 (KMPQALGK). A helical transmembrane segment spans residues 116–136 (LWLLFSMALGVIFVWMMTCVY). Topologically, residues 137–148 (QIDTVPTWHNGY) are periplasmic. A helical membrane pass occupies residues 149–169 (TTLAFFLTVLLSGPILAAAIL). Over 170–180 (RAARVTFNTTP) the chain is Cytoplasmic. Residues 181 to 201 (FAIISVLALIACAGVIVLQGL) form a helical membrane-spanning segment. The Periplasmic segment spans residues 202-222 (SLASIHSSVQQASALVPDYAS). A helical membrane pass occupies residues 223 to 243 (LQVWRVVLLCAGLGCWLCPLI). Residues 244–250 (RRREPHV) lie on the Cytoplasmic side of the membrane. A helical transmembrane segment spans residues 251-271 (AGLILGLILILGGEMIGRVLF). The Periplasmic portion of the chain corresponds to 272–284 (YGLHMTVGMAIAG).

It belongs to the DmsC family. The complex consists of three subunits: YnfF, the reductase; YnfG, an electron transfer protein, and YnfH, a membrane anchor protein.

It localises to the cell inner membrane. Functionally, terminal reductase during anaerobic growth on various sulfoxide and N-oxide compounds. The C subunit anchors the other two subunits to the membrane and stabilize the catalytic subunits. The polypeptide is Anaerobic dimethyl sulfoxide reductase chain YnfH (ynfH) (Escherichia coli (strain K12)).